Consider the following 152-residue polypeptide: Methylglyoxal synthase (152 aa).

Residues 6–152 form the MGS-like domain; sequence RTLATEKNIA…YEGYLKERLK (147 aa). Substrate is bound by residues His19, Lys23, 45-48, and 65-66; these read TGTT and SG. Asp71 (proton donor/acceptor) is an active-site residue. His98 contacts substrate.

The protein belongs to the methylglyoxal synthase family.

The catalysed reaction is dihydroxyacetone phosphate = methylglyoxal + phosphate. Its function is as follows. Catalyzes the formation of methylglyoxal from dihydroxyacetone phosphate. The sequence is that of Methylglyoxal synthase from Proteus mirabilis (strain HI4320).